Here is a 198-residue protein sequence, read N- to C-terminus: Recombination protein RecR (198 aa).

A C4-type zinc finger spans residues 56 to 71 (CHVCGNVDTGDPCGIC). Positions 79–174 (RMLCVVEEVA…RLTQLAHGLP (96 aa)) constitute a Toprim domain.

It belongs to the RecR family.

Functionally, may play a role in DNA repair. It seems to be involved in an RecBC-independent recombinational process of DNA repair. It may act with RecF and RecO. This is Recombination protein RecR from Rhizorhabdus wittichii (strain DSM 6014 / CCUG 31198 / JCM 15750 / NBRC 105917 / EY 4224 / RW1) (Sphingomonas wittichii).